Consider the following 348-residue polypeptide: Mitogen-activated protein kinase kinase 5 (348 aa).

Disordered stretches follow at residues 1–26 and 35–54; these read MKPI…DLSL and LAVP…PASS. Position 6 is a phosphoserine; by ASK7 (serine 6). A Protein kinase domain is found at 70 to 325; it reads LERVNRIGSG…AQQLLQHPFI (256 aa). Residues 76–84 and lysine 99 contribute to the ATP site; that span reads IGSGAGGTV. Aspartate 187 (proton acceptor) is an active-site residue. Threonine 215 is subject to Phosphothreonine. Serine 221 carries the phosphoserine; by ASK7 modification. Phosphoserine is present on serine 221. A Phosphothreonine; by ASK7 modification is found at threonine 225. Arginine 313 bears the ADP-ribosylarginine; by HopF2 mark.

Belongs to the protein kinase superfamily. STE Ser/Thr protein kinase family. MAP kinase kinase subfamily. As to quaternary structure, interacts with P.syringae type III effector HopF2. Interacts with BZR1. Interacts with MPK6 and MPK3. Interacts with RACK1A, RACK1B and RACK1C. Interacts with MAPKKK5 mainly in the cytosol. Binds to BASL. Interacts with MAPKKK20. In terms of processing, phosphorylation at Thr-215 and Ser-221 by MAP kinase kinase kinases positively regulates kinase activity. Phosphorylated by MAPKKK5 and MAPKKK20 in response to abscisic acid (ABA). ADP-ribosylation at Arg-313 by P.syringae type III effector HopF2 reduces the ability of the protein to phosphorylate downstream MPK6. Expressed higher in stems and leaves than in flowers and roots.

The catalysed reaction is L-seryl-[protein] + ATP = O-phospho-L-seryl-[protein] + ADP + H(+). The enzyme catalyses L-threonyl-[protein] + ATP = O-phospho-L-threonyl-[protein] + ADP + H(+). It carries out the reaction L-tyrosyl-[protein] + ATP = O-phospho-L-tyrosyl-[protein] + ADP + H(+). Its activity is regulated as follows. Activated through serine and threonine phosphorylation by MEKK1 and MAPKKK20 in response to abscisic acid (ABA). Inhibited through phosphorylation by GSK3/Shaggy-like kinase ASKs. Inhibited through ADP-Ribosylation by P.syringae HopF2. Activated after high light stress. Its function is as follows. Mitogen-activated protein kinase kinase (MAPKK) which regulates abscisic acid (ABA) responses in a MAPKKK20-MKK5-MPK6 cascade involved in root growth (e.g. root cell division and elongation) and stomatal response, probably via MAPK6 activation by protein phosphorylation. Involved in the second phase of hydrogen peroxide generation during hypersensitive response-like cell death. Involved in the innate immune MAP kinase signaling cascade (MEKK1, MKK4/MKK5 and MPK3/MPK6) downstream of bacterial flagellin receptor FLS2. Activates by phosphorylation the downstream MPK3 and MPK6. YDA-MKK4/MKK5-MPK3/MPK6 module regulates stomatal cell fate before the guard mother cell (GMC) is specified. This MAPK cascade also functions downstream of the ER receptor in regulating coordinated local cell proliferation, which shapes the morphology of plant organs. MKK4 and MKK5 participate in the regulation of floral organ abscission. Target of the Pseudomonas syringae type III effector HopF2, that inhibits the activation of the downstream MPK6 and PAMP-triggered immunity. Plays a critical role in high light stress tolerance by the mediation of the Cu/Zn SODs CSD1 and CSD2 gene expression. Phosphorylates BZR1 in vitro. This chain is Mitogen-activated protein kinase kinase 5, found in Arabidopsis thaliana (Mouse-ear cress).